A 446-amino-acid polypeptide reads, in one-letter code: Chromogranin-A (446 aa).

The signal sequence occupies residues Ser1 to Ala16. Cys33 and Cys54 are oxidised to a cystine. The tract at residues Ala85 to Leu426 is disordered. Ser97 carries the phosphoserine modification. Positions Val105–Glu138 are enriched in basic and acidic residues. Positions Glu160–Ala171 are enriched in acidic residues. Position 209 is a phosphoserine (Ser209). The span at Ala226 to Asp243 shows a compositional bias: basic and acidic residues. Ser286 carries the phosphoserine modification. Gly304 carries the post-translational modification Glycine amide. Ser319 is subject to Phosphoserine. Residues Ser319–Gly346 are compositionally biased toward basic and acidic residues. The span at Glu347 to Pro357 shows a compositional bias: acidic residues. Ser360 carries the phosphoserine modification. Position 361 is a methionine sulfoxide (Met361). Phosphoserine is present on residues Ser387, Ser391, Ser413, and Ser427. Basic and acidic residues predominate over residues Tyr403–Asp420. The O-linked (Xyl...) (chondroitin sulfate) serine glycan is linked to Ser413.

It belongs to the chromogranin/secretogranin protein family. Self-interacts; self-assembly is promoted in vitro by chondroitin sulfate attachment which occurs at mildly acidic pH conditions. Interacts with SCG3. Interacts with ITPR1 in the secretory granules. Post-translationally, O-glycosylated; contains chondroitin sulfate (CS). CS attachment is pH-dependent, being observed at mildly acidic conditions of pH 5 but not at neutral pH, and promotes self-assembly in vitro. Parathyroid CHGA is sulfated on tyrosine residues, whereas adrenal CHGA seems to be mainly sulfated on oligosaccharide residues.

The protein localises to the secreted. Its subcellular location is the cytoplasmic vesicle. It is found in the secretory vesicle. It localises to the neuronal dense core vesicle. In terms of biological role, strongly inhibits glucose induced insulin release from the pancreas. Inhibits low calcium-stimulated parathyroid cell secretion. Its function is as follows. Inhibits catecholamine release from chromaffin cells and noradrenergic neurons by acting as a non-competitive nicotinic cholinergic antagonist. Can induce mast cell migration, degranulation and production of cytokines and chemokines. Functionally, regulates granule biogenesis in endocrine cells by up-regulating the transcription of protease nexin 1 (SERPINE2) via a cAMP-PKA-SP1 pathway. This leads to inhibition of granule protein degradation in the Golgi complex which in turn promotes granule formation. The protein is Chromogranin-A (CHGA) of Sus scrofa (Pig).